Consider the following 279-residue polypeptide: MSIISPQDVKKLREETNAGFGDCKKALSAAGGDFELAKKKLREMGIASAEKRLDRDAKEGRVFSYSNNIHAGLLLVSCETDFVALNHNFVNFGNSLIKELVESGRNSLATSQELELKNLAATIKENIQVKKIFITEIQSNEFVKIYLHGEQSKIGVLVKLKVDDFSKTEDKMLQDFAMDLALHVAALAPIYLRNDDVCPNYIKEQEEIFAKQLELSGKSESIVKGIVAGKIKKHLAEISLLEQGFVKNDKLTVREMLEEVSKAISSKIEIVEFKYLRIG.

The involved in Mg(2+) ion dislocation from EF-Tu stretch occupies residues T80–V83.

This sequence belongs to the EF-Ts family.

It is found in the cytoplasm. Its function is as follows. Associates with the EF-Tu.GDP complex and induces the exchange of GDP to GTP. It remains bound to the aminoacyl-tRNA.EF-Tu.GTP complex up to the GTP hydrolysis stage on the ribosome. This is Elongation factor Ts from Borreliella afzelii (strain PKo) (Borrelia afzelii).